Consider the following 422-residue polypeptide: Glutamate-1-semialdehyde 2,1-aminomutase (422 aa).

An N6-(pyridoxal phosphate)lysine modification is found at Lys258.

It belongs to the class-III pyridoxal-phosphate-dependent aminotransferase family. HemL subfamily. In terms of assembly, homodimer. Pyridoxal 5'-phosphate serves as cofactor.

It is found in the cytoplasm. The enzyme catalyses (S)-4-amino-5-oxopentanoate = 5-aminolevulinate. Its pathway is porphyrin-containing compound metabolism; protoporphyrin-IX biosynthesis; 5-aminolevulinate from L-glutamyl-tRNA(Glu): step 2/2. The chain is Glutamate-1-semialdehyde 2,1-aminomutase from Chlamydia muridarum (strain MoPn / Nigg).